The primary structure comprises 916 residues: Nitrate reductase [NADH] 1 (916 aa).

Residues 1 to 77 are disordered; that stretch reads MAASVQPRQF…DDEEEEQEDW (77 aa). Residues 66 to 76 are compositionally biased toward acidic residues; it reads GSDDEEEEQED. Cys192 lines the Mo-molybdopterin pocket. The region spanning 541–616 is the Cytochrome b5 heme-binding domain; that stretch reads GKQFTMSEVR…LDTYRIGELI (76 aa). Heme contacts are provided by His576 and His599. Residues 656 to 768 enclose the FAD-binding FR-type domain; it reads RDKVPCQLVD…KGPLGHVEYT (113 aa). FAD is bound by residues 708 to 711, 725 to 729, Phe730, Phe737, 742 to 744, Ser792, and Thr795; these read RAYT, LIKVY, and LMT.

The protein belongs to the nitrate reductase family. Homodimer. Requires FAD as cofactor. The cofactor is heme. It depends on Mo-molybdopterin as a cofactor.

It catalyses the reaction nitrite + NAD(+) + H2O = nitrate + NADH + H(+). Nitrate reductase is a key enzyme involved in the first step of nitrate assimilation in plants, fungi and bacteria. The sequence is that of Nitrate reductase [NADH] 1 (NIA1) from Oryza sativa subsp. japonica (Rice).